Consider the following 196-residue polypeptide: MLFRYLVWLFRFIKVKNVASISLLVIGSNYLTTAIANNTSISPTTSSNHITTAIPNNTSILPTTSSNHITTAISNNITDKDDYTHFSTDKTISDSLTPITLYRAIRSTLNDTGTKTMTDHGLTRPYRPTTVIFHSDTSLPVKNATRDNSIKKIYRQVISFFIQSNPLFPCFKNHEVFLNLANILNTILCIILIKNV.

Repeat copies occupy residues 28 to 48 (SNYL…TSSN) and 49 to 68 (HITT…SSNH). A 3; approximate repeat occupies 69 to 87 (ITTAISNNITDKDDYTHFS).

Belongs to the asfivirus I196L family.

The chain is Late protein I196L from Ornithodoros (relapsing fever ticks).